A 44-amino-acid polypeptide reads, in one-letter code: Cytochrome b559 subunit beta (44 aa).

Residues 19 to 35 form a helical membrane-spanning segment; the sequence is WIAVHTLAVPSVFFLGA. His-23 serves as a coordination point for heme.

This sequence belongs to the PsbE/PsbF family. In terms of assembly, heterodimer of an alpha subunit and a beta subunit. PSII is composed of 1 copy each of membrane proteins PsbA, PsbB, PsbC, PsbD, PsbE, PsbF, PsbH, PsbI, PsbJ, PsbK, PsbL, PsbM, PsbT, PsbX, PsbY, PsbZ, Psb30/Ycf12, peripheral proteins PsbO, CyanoQ (PsbQ), PsbU, PsbV and a large number of cofactors. It forms dimeric complexes. Heme b is required as a cofactor.

Its subcellular location is the cellular thylakoid membrane. This b-type cytochrome is tightly associated with the reaction center of photosystem II (PSII). PSII is a light-driven water:plastoquinone oxidoreductase that uses light energy to abstract electrons from H(2)O, generating O(2) and a proton gradient subsequently used for ATP formation. It consists of a core antenna complex that captures photons, and an electron transfer chain that converts photonic excitation into a charge separation. This Cyanothece sp. (strain PCC 7425 / ATCC 29141) protein is Cytochrome b559 subunit beta.